The sequence spans 456 residues: MFLLLPFDSLIVNLLGISLTVLFTLLLVFIIVPAIFGVSFGIRKLYMKTLLKIFAWATLRMERGAKERNHQLYKPYTNGIIAKDPTSLEEEIKEIRRSGSSKALDKTPEFELSDIFYFCRKGMETIMDDEVTKRFSAEELESWNLLSRTNYNFQYISLRLTILWGLGVLIRYCFLLPLRIALAFTGIGLLVVGTTMVGYLPNGRFKEFLSKHVHLMCYRICVRALTAIITYHNRKNRPRNGGICVANHTSPIDVIILASDGYYAMVGQVHGGLMGVIQRAMVKACPHVWFERSEVKDRHLVAKRLTEHVQDKSKLPILIFPEGTCINNTSVMMFKKGSFEIGATVYPVAIKYDPQFGDAFWNSSKYGMVTYLLRMMTSWAIVCSVWYLPPMTREKDEDAVQFANRVKSAIARQGGLVDLLWDGGLKREKVKDTFKEEQQKLYSKMIVGNHEDRSRS.

An N-terminal signal peptide occupies residues 1-37 (MFLLLPFDSLIVNLLGISLTVLFTLLLVFIIVPAIFG). 2 helical membrane-spanning segments follow: residues 156–176 (ISLRLTILWGLGVLIRYCFLL) and 180–200 (IALAFTGIGLLVVGTTMVGYL). N-linked (GlcNAc...) asparagine glycosylation is present at Asn247. Positions 248 to 253 (HTSPID) match the HXXXXD motif motif. 3 N-linked (GlcNAc...) asparagine glycosylation sites follow: Asn327, Asn328, and Asn362.

This sequence belongs to the 1-acyl-sn-glycerol-3-phosphate acyltransferase family. In terms of tissue distribution, highly expressed in testis.

It localises to the endoplasmic reticulum membrane. It carries out the reaction sn-glycerol 3-phosphate + an acyl-CoA = a 1-acyl-sn-glycero-3-phosphate + CoA. The enzyme catalyses dodecanoyl-CoA + sn-glycerol 3-phosphate = 1-dodecanoyl-sn-glycerol 3-phosphate + CoA. The catalysed reaction is sn-glycerol 3-phosphate + hexadecanoyl-CoA = 1-hexadecanoyl-sn-glycero-3-phosphate + CoA. It catalyses the reaction sn-glycerol 3-phosphate + octadecanoyl-CoA = 1-octadecanoyl-sn-glycero-3-phosphate + CoA. It carries out the reaction sn-glycerol 3-phosphate + (9Z)-octadecenoyl-CoA = 1-(9Z-octadecenoyl)-sn-glycero-3-phosphate + CoA. The enzyme catalyses (9Z,12Z)-octadecadienoyl-CoA + sn-glycerol 3-phosphate = 1-(9Z,12Z)-octadecadienoyl-sn-glycero-3-phosphate + CoA. It participates in phospholipid metabolism; CDP-diacylglycerol biosynthesis; CDP-diacylglycerol from sn-glycerol 3-phosphate: step 1/3. In terms of biological role, converts glycerol-3-phosphate to 1-acyl-sn-glycerol-3-phosphate (lysophosphatidic acid or LPA) by incorporating an acyl moiety at the sn-1 position of the glycerol backbone. Active against both saturated and unsaturated long-chain fatty acyl-CoAs. Protects cells against lipotoxicity. This is Glycerol-3-phosphate acyltransferase 4 from Mus musculus (Mouse).